The primary structure comprises 514 residues: Adenylosuccinate synthetase 2, chloroplastic (514 aa).

The N-terminal 56 residues, 1 to 56 (MAMAAAAAVASQGLLATSSQQQKKSSAKLICNAATFFSGKRLLWVKSCNNGAVGLR), are a transit peptide targeting the chloroplast. GTP is bound by residues 100–106 (GDEGKGK) and 128–130 (GHT). The Proton acceptor role is filled by D101. Residues D101 and G128 each contribute to the Mg(2+) site. IMP contacts are provided by residues 101–104 (DEGK), 126–129 (NAGH), T218, R232, Q312, T327, and R391. The active-site Proton donor is the H129. 387–393 (TTTGRPR) lines the substrate pocket. GTP-binding positions include R393, 419–421 (KLD), and 502–504 (GVG).

Belongs to the adenylosuccinate synthetase family. Homodimer. Mg(2+) serves as cofactor.

It is found in the plastid. It localises to the chloroplast. It carries out the reaction IMP + L-aspartate + GTP = N(6)-(1,2-dicarboxyethyl)-AMP + GDP + phosphate + 2 H(+). It participates in purine metabolism; AMP biosynthesis via de novo pathway; AMP from IMP: step 1/2. Functionally, plays an important role in the de novo pathway and in the salvage pathway of purine nucleotide biosynthesis. Catalyzes the first committed step in the biosynthesis of AMP from IMP. The protein is Adenylosuccinate synthetase 2, chloroplastic of Physcomitrium patens (Spreading-leaved earth moss).